The primary structure comprises 727 residues: YTH domain-containing protein 1 (727 aa).

Residues 1-12 (MAADSREEKDGE) show a composition bias toward basic and acidic residues. The interval 1–338 (MAADSREEKD…KHEKLSSSVR (338 aa)) is disordered. Ser-35 is modified (phosphoserine). Positions 50–59 (DRMESTDTKR) are enriched in basic and acidic residues. Polar residues predominate over residues 63 to 90 (SVHSRQLVSKPLSSSVSNNKRIVSTKGK). Residues 91–115 (SATEYKNEEYQRSERNKRLDADRKI) are compositionally biased toward basic and acidic residues. Residue Lys-96 forms a Glycyl lysine isopeptide (Lys-Gly) (interchain with G-Cter in SUMO2) linkage. Phosphoserine occurs at positions 118 and 120. The segment covering 124-144 (EPYKNQPEKTCVRKRDPERRA) has biased composition (basic and acidic residues). Ser-146 bears the Phosphoserine mark. Thr-148 is modified (phosphothreonine). Basic and acidic residues-rich tracts occupy residues 151 to 163 (GSERIGLEVDRRA) and 170 to 185 (SKEEVNSEEYGSDHET). Residues 199–254 (ENEEEGVEEDVEEDEEVEEDAEEDEEVDEDGEEEEEEEEEEEEEEEEEEEEYEQDE) show a composition bias toward acidic residues. The span at 255 to 270 (RDQKEEGNDYDTRSEA) shows a compositional bias: basic and acidic residues. Over residues 280 to 289 (FTDGSVRSGS) the composition is skewed to polar residues. A phosphoserine mark is found at Ser-308, Ser-315, Ser-317, Ser-318, and Ser-320. Residues 315-325 (SGSSASESYAG) show a composition bias toward low complexity. The 138-residue stretch at 355–492 (ARFFLIKSNN…ECGTQLCLLF (138 aa)) folds into the YTH domain. RNA contacts are provided by residues 361-363 (KSN) and 377-378 (WS). The residue at position 424 (Ser-424) is a Phosphoserine. Trp-428 is a binding site for RNA. Position 435 is a phosphoserine (Ser-435). Residue Asp-476 coordinates RNA. Basic residues predominate over residues 508-523 (RHKRRMHSQPRSRGRP). Disordered stretches follow at residues 508–564 (RHKR…PGYL), 607–643 (GMPPYPGMEQPPHHPYYQHHAPPPQAHPPYSGHHPVP), and 669–727 (AVVS…RYRR). Over residues 524–564 (SRREPVRDVGRRRPEDYDIHNSRKKPRIDYPPEFHQRPGYL) the composition is skewed to basic and acidic residues. Phosphoserine is present on Ser-545. The segment covering 679 to 727 (RERDRERERDRPRDNRRDRERDRGRDRERERERLCDRDRDRGERGRYRR) has biased composition (basic and acidic residues).

Interacts with SRSF1. Interacts with SRSF2. Interacts with SRSF3. Interacts with SRSF7. Interacts with SRSF10. Interacts with CPSF6. Interacts with KHDRBS1/SAM68. Interacts with TRA2B. Interacts with KHDRBS3. Interacts with EMD. Interacts with RBMX. Interacts with ZCCHC8. Tyrosine phosphorylated.

The protein resides in the nucleus. It is found in the nucleus speckle. In terms of biological role, regulator of alternative splicing that specifically recognizes and binds N6-methyladenosine (m6A)-containing RNAs. M6A is a modification present at internal sites of mRNAs and some non-coding RNAs and plays a role in the efficiency of mRNA splicing, processing and stability. Acts as a key regulator of exon-inclusion or exon-skipping during alternative splicing via interaction with mRNA splicing factors SRSF3 and SRSF10. Specifically binds m6A-containing mRNAs and promotes recruitment of SRSF3 to its mRNA-binding elements adjacent to m6A sites, leading to exon-inclusion during alternative splicing. In contrast, interaction with SRSF3 prevents interaction with SRSF10, a splicing factor that promotes exon skipping: this prevents SRSF10 from binding to its mRNA-binding sites close to m6A-containing regions, leading to inhibit exon skipping during alternative splicing. May also regulate alternative splice site selection. Also involved in nuclear export of m6A-containing mRNAs via interaction with SRSF3: interaction with SRSF3 facilitates m6A-containing mRNA-binding to both SRSF3 and NXF1, promoting mRNA nuclear export. Involved in S-adenosyl-L-methionine homeostasis by regulating expression of MAT2A transcripts, probably by binding m6A-containing MAT2A mRNAs. Also recognizes and binds m6A on other RNA molecules. Involved in random X inactivation mediated by Xist RNA: recognizes and binds m6A-containing Xist and promotes transcription repression activity of Xist. Also recognizes and binds m6A-containing single-stranded DNA. Involved in germline development: required for spermatogonial development in males and oocyte growth and maturation in females, probably via its role in alternative splicing. This Homo sapiens (Human) protein is YTH domain-containing protein 1.